We begin with the raw amino-acid sequence, 222 residues long: Hexitol phosphatase B (222 aa).

The active-site Nucleophile is D13. A divalent metal cation-binding residues include D13 and D15. Residues 13–15 (DMD), 115–116 (SA), and K148 each bind substrate. Catalysis depends on D15, which acts as the Proton donor. D173 lines the a divalent metal cation pocket.

This sequence belongs to the HAD-like hydrolase superfamily. CbbY/CbbZ/Gph/YieH family. Mg(2+) is required as a cofactor. The cofactor is Mn(2+). Requires Co(2+) as cofactor. It depends on Zn(2+) as a cofactor.

The enzyme catalyses sugar phosphate + H2O = sugar + phosphate.. It carries out the reaction 2-deoxy-D-glucose 6-phosphate + H2O = 2-deoxy-D-glucose + phosphate. It catalyses the reaction D-mannitol 1-phosphate + H2O = D-mannitol + phosphate. The catalysed reaction is D-sorbitol 6-phosphate + H2O = D-sorbitol + phosphate. In terms of biological role, sugar-phosphate phosphohydrolase that catalyzes the dephosphorylation of D-mannitol 1-phosphate and D-sorbitol 6-phosphate. Also catalyzes the dephosphorylation of 2-deoxyglucose 6-phosphate (2dGlu6P); this is a biologically important activity in vivo since it contributes to the elimination of this toxic compound and plays an important role in the resistance of E.coli to 2-deoxyglucose. The protein is Hexitol phosphatase B of Escherichia coli O157:H7.